A 385-amino-acid chain; its full sequence is tRNA-specific 2-thiouridylase MnmA (385 aa).

Residues 29 to 36 (GLSGGVDS) and leucine 55 each bind ATP. Cysteine 116 acts as the Nucleophile in catalysis. A disulfide bond links cysteine 116 and cysteine 225. Glycine 141 serves as a coordination point for ATP. Residues 175–177 (KDQ) form an interaction with tRNA region. The active-site Cysteine persulfide intermediate is the cysteine 225. Residues 330–331 (RY) are interaction with tRNA.

The protein belongs to the MnmA/TRMU family.

The protein resides in the cytoplasm. It carries out the reaction S-sulfanyl-L-cysteinyl-[protein] + uridine(34) in tRNA + AH2 + ATP = 2-thiouridine(34) in tRNA + L-cysteinyl-[protein] + A + AMP + diphosphate + H(+). Its function is as follows. Catalyzes the 2-thiolation of uridine at the wobble position (U34) of tRNA, leading to the formation of s(2)U34. The polypeptide is tRNA-specific 2-thiouridylase MnmA (Prochlorococcus marinus (strain AS9601)).